We begin with the raw amino-acid sequence, 244 residues long: Phosphoadenosine 5'-phosphosulfate reductase (244 aa).

The active-site Nucleophile; cysteine thiosulfonate intermediate is C239.

It belongs to the PAPS reductase family. CysH subfamily.

It localises to the cytoplasm. It carries out the reaction [thioredoxin]-disulfide + sulfite + adenosine 3',5'-bisphosphate + 2 H(+) = [thioredoxin]-dithiol + 3'-phosphoadenylyl sulfate. Its pathway is sulfur metabolism; hydrogen sulfide biosynthesis; sulfite from sulfate: step 3/3. In terms of biological role, catalyzes the formation of sulfite from phosphoadenosine 5'-phosphosulfate (PAPS) using thioredoxin as an electron donor. In Shigella flexneri, this protein is Phosphoadenosine 5'-phosphosulfate reductase.